A 599-amino-acid chain; its full sequence is Proteasome-associated ATPase (599 aa).

The segment at 1 to 22 (MPHGHPGSQPDEGGELSNGSSS) is disordered. The stretch at 21 to 97 (SSGELTAQIR…LREEVDRLAQ (77 aa)) forms a coiled coil. Position 286–291 (286–291 (GCGKTL)) interacts with ATP. Residues 598–599 (YL) are docks into pockets in the proteasome alpha-ring.

The protein belongs to the AAA ATPase family. As to quaternary structure, homohexamer. Assembles into a hexameric ring structure that caps the 20S proteasome core. Strongly interacts with the prokaryotic ubiquitin-like protein Pup through a hydrophobic interface; the interacting region of ARC lies in its N-terminal coiled-coil domain. There is one Pup binding site per ARC hexamer ring. Upon ATP-binding, the C-terminus of ARC interacts with the alpha-rings of the proteasome core, possibly by binding to the intersubunit pockets.

It functions in the pathway protein degradation; proteasomal Pup-dependent pathway. ATPase which is responsible for recognizing, binding, unfolding and translocation of pupylated proteins into the bacterial 20S proteasome core particle. May be essential for opening the gate of the 20S proteasome via an interaction with its C-terminus, thereby allowing substrate entry and access to the site of proteolysis. Thus, the C-termini of the proteasomal ATPase may function like a 'key in a lock' to induce gate opening and therefore regulate proteolysis. The chain is Proteasome-associated ATPase from Actinosynnema mirum (strain ATCC 29888 / DSM 43827 / JCM 3225 / NBRC 14064 / NCIMB 13271 / NRRL B-12336 / IMRU 3971 / 101).